A 25-amino-acid chain; its full sequence is Small ribosomal subunit protein eS32 (25 aa).

Residues Met1–Lys25 form a disordered region.

This sequence belongs to the eukaryotic ribosomal protein eS32 family. As to quaternary structure, component of the large ribosomal subunit.

The protein resides in the cytoplasm. Functionally, component of the small ribosomal subunit. The ribosome is a large ribonucleoprotein complex responsible for the synthesis of proteins in the cell. The protein is Small ribosomal subunit protein eS32 (rpl41) of Cyprinus carpio (Common carp).